The chain runs to 430 residues: Chaperone SurA (430 aa).

The N-terminal stretch at 1-25 (MQIIKTTIATFTAIAFTGAASFTSA) is a signal peptide. 2 consecutive PpiC domains span residues 176–277 (SPDY…KLYE) and 286–385 (VNQT…KVEE).

Its subcellular location is the periplasm. The catalysed reaction is [protein]-peptidylproline (omega=180) = [protein]-peptidylproline (omega=0). Chaperone involved in the correct folding and assembly of outer membrane proteins. Recognizes specific patterns of aromatic residues and the orientation of their side chains, which are found more frequently in integral outer membrane proteins. May act in both early periplasmic and late outer membrane-associated steps of protein maturation. This Saccharophagus degradans (strain 2-40 / ATCC 43961 / DSM 17024) protein is Chaperone SurA.